A 185-amino-acid polypeptide reads, in one-letter code: Ribosome maturation factor RimP (185 aa).

Positions 162–185 (VRLERAADGAPERGGDRGDTEESR) are disordered.

This sequence belongs to the RimP family.

The protein resides in the cytoplasm. Functionally, required for maturation of 30S ribosomal subunits. The protein is Ribosome maturation factor RimP of Saccharopolyspora erythraea (strain ATCC 11635 / DSM 40517 / JCM 4748 / NBRC 13426 / NCIMB 8594 / NRRL 2338).